Consider the following 349-residue polypeptide: MQTLSSIINAIVPLDNVAMARTATRLNGLVKPTGSFGRLEHLAIQLAGMRGLSGHHIDRKQIIVMVADHGVYDEGVTISPKSATAIHAQNMMKGITGVCVLAENAGADVKVVDVGIDSDPVPGLVNMKVERGSGNIAQGPAMSRQQAEDLLLASACLTLEQITNGVQLFGVGELGMANTTPAAAVVSVFTDNDPQQIVGIGANFPSERLHHKVAVVRQAIEINRPDARDSIDVLAKVGGYDLVGMAGVMLGAASVGLPVILDGFPSYAAALAACRIAPDVRHYLIPSHLSAEKGSIIALQHLQLAPYLHLDMRLGEGSGAALAMHLVDAACAMYNNMGLLAESNIVLPF.

Glutamate 316 (proton acceptor) is an active-site residue.

This sequence belongs to the CobT family.

The enzyme catalyses 5,6-dimethylbenzimidazole + nicotinate beta-D-ribonucleotide = alpha-ribazole 5'-phosphate + nicotinate + H(+). The protein operates within nucleoside biosynthesis; alpha-ribazole biosynthesis; alpha-ribazole from 5,6-dimethylbenzimidazole: step 1/2. In terms of biological role, catalyzes the synthesis of alpha-ribazole-5'-phosphate from nicotinate mononucleotide (NAMN) and 5,6-dimethylbenzimidazole (DMB). The protein is Nicotinate-nucleotide--dimethylbenzimidazole phosphoribosyltransferase of Photorhabdus laumondii subsp. laumondii (strain DSM 15139 / CIP 105565 / TT01) (Photorhabdus luminescens subsp. laumondii).